A 92-amino-acid polypeptide reads, in one-letter code: UPF0473 protein OB2006 (92 aa).

The protein belongs to the UPF0473 family.

This Oceanobacillus iheyensis (strain DSM 14371 / CIP 107618 / JCM 11309 / KCTC 3954 / HTE831) protein is UPF0473 protein OB2006.